The chain runs to 102 residues: uncharacterized protein (102 aa).

The interval 79 to 102 (AELLHPSPAPMPPATHGRSAAPCS) is disordered.

This is an uncharacterized protein from Homo sapiens (Human).